The chain runs to 84 residues: MIFQKIQEFIAEQLSIDKNNIKLESDLKEDLGIDSIDAVGLIIKIEEFFKLEVSDETLQKFKNVKDILEYIQQHVDNYDYLEKK.

Residues 1 to 75 (MIFQKIQEFI…DILEYIQQHV (75 aa)) form the Carrier domain. An O-(pantetheine 4'-phosphoryl)serine modification is found at Ser35.

Belongs to the acyl carrier protein (ACP) family. In terms of processing, 4'-phosphopantetheine is transferred from CoA to a specific serine of apo-ACP by AcpS. This modification is essential for activity because fatty acids are bound in thioester linkage to the sulfhydryl of the prosthetic group.

The protein localises to the cytoplasm. The protein operates within lipid metabolism; fatty acid biosynthesis. Functionally, carrier of the growing fatty acid chain in fatty acid biosynthesis. In Phytoplasma mali (strain AT), this protein is Acyl carrier protein.